The following is a 715-amino-acid chain: ATP-dependent DNA helicase Hel308 (715 aa).

ATP-binding positions include Q35 and S53–T60. Residues K40–N203 form the Helicase ATP-binding domain. The short motif at D152–H155 is the DEAH box element. Residues H236–G442 form the Helicase C-terminal domain.

It belongs to the helicase family. Hel308 subfamily. As to quaternary structure, monomer. Interacts with PINA ATPase which decreases both DNA helicase activities of this protein.

It catalyses the reaction Couples ATP hydrolysis with the unwinding of duplex DNA by translocating in the 3'-5' direction.. The enzyme catalyses ATP + H2O = ADP + phosphate + H(+). It carries out the reaction Couples ATP hydrolysis with the unwinding of duplex DNA at the replication fork by translocating in the 5'-3' direction. This creates two antiparallel DNA single strands (ssDNA). The leading ssDNA polymer is the template for DNA polymerase III holoenzyme which synthesizes a continuous strand.. PINA inhibits the (weak) 5'-3' but not the 3'-5' helicase activity of this protein on overhang substrates. DNA-dependent ATPase and 3'-5' DNA helicase that may be involved in repair of stalled replication forks. In terms of biological role, has predominantly 3'-5' helicase activity but also a weak 5'-3' helicase activity. Has the ability to unwind replication forks, preferentially removing the lagging strand. Hjc, Hjm (Hel308) and branch migration ATPase PINA coordinate HJ migration and cleavage of replication forks in a coordinated way. This is ATP-dependent DNA helicase Hel308 from Saccharolobus islandicus (strain REY15A) (Sulfolobus islandicus).